The chain runs to 242 residues: 4-hydroxy-tetrahydrodipicolinate reductase (242 aa).

NAD(+) is bound by residues 8 to 13 (GSNGRM), 75 to 77 (GTT), and 99 to 102 (ATNM). Residue His131 is the Proton donor/acceptor of the active site. His132 lines the (S)-2,3,4,5-tetrahydrodipicolinate pocket. The active-site Proton donor is the Lys135. Residue 141 to 142 (GT) coordinates (S)-2,3,4,5-tetrahydrodipicolinate.

It belongs to the DapB family.

It is found in the cytoplasm. The enzyme catalyses (S)-2,3,4,5-tetrahydrodipicolinate + NAD(+) + H2O = (2S,4S)-4-hydroxy-2,3,4,5-tetrahydrodipicolinate + NADH + H(+). It catalyses the reaction (S)-2,3,4,5-tetrahydrodipicolinate + NADP(+) + H2O = (2S,4S)-4-hydroxy-2,3,4,5-tetrahydrodipicolinate + NADPH + H(+). It functions in the pathway amino-acid biosynthesis; L-lysine biosynthesis via DAP pathway; (S)-tetrahydrodipicolinate from L-aspartate: step 4/4. Catalyzes the conversion of 4-hydroxy-tetrahydrodipicolinate (HTPA) to tetrahydrodipicolinate. The protein is 4-hydroxy-tetrahydrodipicolinate reductase of Campylobacter lari (strain RM2100 / D67 / ATCC BAA-1060).